A 346-amino-acid chain; its full sequence is Methylthioribose-1-phosphate isomerase (346 aa).

Residues 48 to 50, arginine 91, and glutamine 196 contribute to the substrate site; that span reads RGA. Aspartate 237 serves as the catalytic Proton donor. 247 to 248 provides a ligand contact to substrate; the sequence is NK.

Belongs to the eIF-2B alpha/beta/delta subunits family. MtnA subfamily.

It carries out the reaction 5-(methylsulfanyl)-alpha-D-ribose 1-phosphate = 5-(methylsulfanyl)-D-ribulose 1-phosphate. It participates in amino-acid biosynthesis; L-methionine biosynthesis via salvage pathway; L-methionine from S-methyl-5-thio-alpha-D-ribose 1-phosphate: step 1/6. Catalyzes the interconversion of methylthioribose-1-phosphate (MTR-1-P) into methylthioribulose-1-phosphate (MTRu-1-P). In Thermosipho melanesiensis (strain DSM 12029 / CIP 104789 / BI429), this protein is Methylthioribose-1-phosphate isomerase.